We begin with the raw amino-acid sequence, 70 residues long: Large ribosomal subunit protein eL43 (70 aa).

Positions 36, 39, 55, and 58 each coordinate Zn(2+). The C4-type zinc-finger motif lies at 36–58; the sequence is CPYCKTTGKVIRLASGIWYCKKC.

It belongs to the eukaryotic ribosomal protein eL43 family. Putative zinc-binding subfamily. As to quaternary structure, part of the 50S ribosomal subunit. Requires Zn(2+) as cofactor.

Binds to the 23S rRNA. The protein is Large ribosomal subunit protein eL43 of Saccharolobus solfataricus (strain ATCC 35092 / DSM 1617 / JCM 11322 / P2) (Sulfolobus solfataricus).